A 201-amino-acid polypeptide reads, in one-letter code: Probable GTP-binding protein EngB (201 aa).

The region spanning 21–191 (AAPQIILAGR…WNLLDVTAIP (171 aa)) is the EngB-type G domain. GTP is bound by residues 29–36 (GRSNVGKS), 56–60 (GKTRS), 75–78 (DLPG), 142–145 (TKSD), and 168–172 (ICVSS). Mg(2+) contacts are provided by S36 and T58.

The protein belongs to the TRAFAC class TrmE-Era-EngA-EngB-Septin-like GTPase superfamily. EngB GTPase family. It depends on Mg(2+) as a cofactor.

Its function is as follows. Necessary for normal cell division and for the maintenance of normal septation. This chain is Probable GTP-binding protein EngB, found in Maridesulfovibrio salexigens (strain ATCC 14822 / DSM 2638 / NCIMB 8403 / VKM B-1763) (Desulfovibrio salexigens).